Reading from the N-terminus, the 330-residue chain is Probable allantoicase (330 aa).

The protein belongs to the allantoicase family.

The enzyme catalyses allantoate + H2O = (S)-ureidoglycolate + urea. It functions in the pathway nitrogen metabolism; (S)-allantoin degradation; (S)-ureidoglycolate from allantoate (aminidohydrolase route): step 1/1. The protein is Probable allantoicase of Photobacterium profundum (strain SS9).